A 365-amino-acid chain; its full sequence is SWR1 complex subunit 2 (365 aa).

Disordered regions lie at residues 43–83 (ALKE…NEKE) and 95–147 (PGKT…EGEK). The segment covering 48–74 (EHDDEYEAEREVADEFDSDFNDDEPEP) has biased composition (acidic residues). Residues 99–108 (ASKKKKKKTK) show a composition bias toward basic residues. The span at 118–132 (GDEKPGEELGNKEQE) shows a compositional bias: basic and acidic residues. Coiled coils occupy residues 123-150 (GEEL…KVIR) and 184-225 (GEEK…KAIV). The segment covering 133–144 (EKEENEAQEDME) has biased composition (acidic residues). A disordered region spans residues 333 to 365 (RTKIPKSNKSFSLRSSARFLSSESEEESEEDSD). A compositionally biased stretch (low complexity) spans 342 to 354 (SFSLRSSARFLSS). A compositionally biased stretch (acidic residues) spans 355-365 (ESEEESEEDSD).

The protein belongs to the VPS72/YL1 family. As to quaternary structure, component of the SWR1 chromatin-remodeling complex composed of at least ARP6/ESD1/SUF3, PIE1, SWC6, SWC2 and H2AZs (HTA8, HTA9, HTA11). Interacts directly with SWC6 and H2AZs, but not with ARP6.

Its function is as follows. Component of the SWR1 complex which mediates the ATP-dependent exchange of histone H2A for the H2A variant H2A.F/Z leading to transcriptional regulation of selected genes (e.g. FLC) by chromatin remodeling. The chain is SWR1 complex subunit 2 (SWC2) from Arabidopsis thaliana (Mouse-ear cress).